Here is a 360-residue protein sequence, read N- to C-terminus: Phospho-N-acetylmuramoyl-pentapeptide-transferase (360 aa).

The next 10 membrane-spanning stretches (helical) occupy residues 27–47, 72–92, 94–114, 132–152, 168–188, 199–219, 236–256, 263–283, 288–308, and 338–358; these read IVSLLTALFISLWMGPHLIAW, PTMGGLMILFSITISVLMWAY, SNPYVWCVLFILIGYGIVGFI, WKYFWQSIIALAAAFTMYSIG, IMPQLGLLYVLLAYFVIVGTS, GLAIMPTVFVAAGFALVAWAT, AGELVIVCTAIVGAGLGFLWF, VFMGDVGSLALGGALGTIAVL, FLLVIMGGVFVVETLSVILQV, and VIVRFWIISLMLVLIGLATLK.

This sequence belongs to the glycosyltransferase 4 family. MraY subfamily. The cofactor is Mg(2+).

It is found in the cell inner membrane. The catalysed reaction is UDP-N-acetyl-alpha-D-muramoyl-L-alanyl-gamma-D-glutamyl-meso-2,6-diaminopimeloyl-D-alanyl-D-alanine + di-trans,octa-cis-undecaprenyl phosphate = di-trans,octa-cis-undecaprenyl diphospho-N-acetyl-alpha-D-muramoyl-L-alanyl-D-glutamyl-meso-2,6-diaminopimeloyl-D-alanyl-D-alanine + UMP. Its pathway is cell wall biogenesis; peptidoglycan biosynthesis. Functionally, catalyzes the initial step of the lipid cycle reactions in the biosynthesis of the cell wall peptidoglycan: transfers peptidoglycan precursor phospho-MurNAc-pentapeptide from UDP-MurNAc-pentapeptide onto the lipid carrier undecaprenyl phosphate, yielding undecaprenyl-pyrophosphoryl-MurNAc-pentapeptide, known as lipid I. The sequence is that of Phospho-N-acetylmuramoyl-pentapeptide-transferase from Yersinia pseudotuberculosis serotype O:1b (strain IP 31758).